Consider the following 389-residue polypeptide: Succinate--CoA ligase [ADP-forming] subunit beta (389 aa).

Positions 9-236 constitute an ATP-grasp domain; sequence RDLFEKHGVP…KTTADPLEEK (228 aa). ATP is bound by residues K45, 52 to 54, A94, and E99; that span reads GRG. Mg(2+) contacts are provided by N191 and D205. Substrate-binding positions include N256 and 318–320; that span reads GIT.

This sequence belongs to the succinate/malate CoA ligase beta subunit family. In terms of assembly, heterotetramer of two alpha and two beta subunits. The cofactor is Mg(2+).

It carries out the reaction succinate + ATP + CoA = succinyl-CoA + ADP + phosphate. The enzyme catalyses GTP + succinate + CoA = succinyl-CoA + GDP + phosphate. It functions in the pathway carbohydrate metabolism; tricarboxylic acid cycle; succinate from succinyl-CoA (ligase route): step 1/1. In terms of biological role, succinyl-CoA synthetase functions in the citric acid cycle (TCA), coupling the hydrolysis of succinyl-CoA to the synthesis of either ATP or GTP and thus represents the only step of substrate-level phosphorylation in the TCA. The beta subunit provides nucleotide specificity of the enzyme and binds the substrate succinate, while the binding sites for coenzyme A and phosphate are found in the alpha subunit. In Kocuria rhizophila (strain ATCC 9341 / DSM 348 / NBRC 103217 / DC2201), this protein is Succinate--CoA ligase [ADP-forming] subunit beta.